We begin with the raw amino-acid sequence, 144 residues long: 6-pyruvoyl tetrahydrobiopterin synthase (144 aa).

Residues 1-4 constitute a propeptide that is removed on maturation; that stretch reads MNAA. Ser18 is modified (phosphoserine). His23 contacts Zn(2+). Phosphoserine is present on Ser27. Cys42 serves as the catalytic Proton acceptor. Residues His48 and His50 each contribute to the Zn(2+) site. The Charge relay system role is filled by His89. Tyr127 bears the Phosphotyrosine mark. Glu133 (charge relay system) is an active-site residue.

Belongs to the PTPS family. Homohexamer formed of two homotrimers in a head to head fashion. Requires Zn(2+) as cofactor. Phosphorylation of Ser-18 is required for maximal enzyme activity.

The catalysed reaction is 7,8-dihydroneopterin 3'-triphosphate = 6-pyruvoyl-5,6,7,8-tetrahydropterin + triphosphate + H(+). Its pathway is cofactor biosynthesis; tetrahydrobiopterin biosynthesis; tetrahydrobiopterin from 7,8-dihydroneopterin triphosphate: step 1/3. Involved in the biosynthesis of tetrahydrobiopterin, an essential cofactor of aromatic amino acid hydroxylases. Catalyzes the transformation of 7,8-dihydroneopterin triphosphate into 6-pyruvoyl tetrahydropterin. This is 6-pyruvoyl tetrahydrobiopterin synthase (Pts) from Rattus norvegicus (Rat).